The sequence spans 148 residues: Tetratricopeptide repeat protein 32 (148 aa).

TPR repeat units lie at residues 12–45 (SSAALATAQARFSRGEFAEARELYSAFIGQCARH), 55–88 (ATAYNNRGQTKYFSVDFYEAMDDYTSAIEILPSF), and 89–122 (EVPYYNRGLIRYRLGYFDEALEDFKKALDLNPGF).

This Mus musculus (Mouse) protein is Tetratricopeptide repeat protein 32 (Ttc32).